Reading from the N-terminus, the 166-residue chain is NAD(P)H-quinone oxidoreductase subunit I, chloroplastic (166 aa).

2 4Fe-4S ferredoxin-type domains span residues 55 to 84 (GRIHFEFDKCIACEVCVRVCPIDLPVVDWK) and 95 to 124 (LNYSIDFGICIFCGNCVEYCPTNCLSMTEE). 8 residues coordinate [4Fe-4S] cluster: Cys64, Cys67, Cys70, Cys74, Cys104, Cys107, Cys110, and Cys114.

Belongs to the complex I 23 kDa subunit family. In terms of assembly, NDH is composed of at least 16 different subunits, 5 of which are encoded in the nucleus. The cofactor is [4Fe-4S] cluster.

It localises to the plastid. The protein localises to the chloroplast thylakoid membrane. It catalyses the reaction a plastoquinone + NADH + (n+1) H(+)(in) = a plastoquinol + NAD(+) + n H(+)(out). It carries out the reaction a plastoquinone + NADPH + (n+1) H(+)(in) = a plastoquinol + NADP(+) + n H(+)(out). NDH shuttles electrons from NAD(P)H:plastoquinone, via FMN and iron-sulfur (Fe-S) centers, to quinones in the photosynthetic chain and possibly in a chloroplast respiratory chain. The immediate electron acceptor for the enzyme in this species is believed to be plastoquinone. Couples the redox reaction to proton translocation, and thus conserves the redox energy in a proton gradient. The sequence is that of NAD(P)H-quinone oxidoreductase subunit I, chloroplastic from Tridax balbisioides (Coatbuttons).